We begin with the raw amino-acid sequence, 140 residues long: UPF0306 protein YhbP (140 aa).

The protein belongs to the UPF0306 family.

The sequence is that of UPF0306 protein YhbP from Escherichia coli O6:H1 (strain CFT073 / ATCC 700928 / UPEC).